A 245-amino-acid polypeptide reads, in one-letter code: 2,3-bisphosphoglycerate-dependent phosphoglycerate mutase (245 aa).

Residues 8–15, 21–22, Arg60, 87–90, Lys98, 114–115, and 183–184 each bind substrate; these read RHGQSLWN, TG, ERHY, RR, and GN. Residue His9 is the Tele-phosphohistidine intermediate of the active site. Residue Glu87 is the Proton donor/acceptor of the active site.

This sequence belongs to the phosphoglycerate mutase family. BPG-dependent PGAM subfamily.

It carries out the reaction (2R)-2-phosphoglycerate = (2R)-3-phosphoglycerate. Its pathway is carbohydrate degradation; glycolysis; pyruvate from D-glyceraldehyde 3-phosphate: step 3/5. Functionally, catalyzes the interconversion of 2-phosphoglycerate and 3-phosphoglycerate. The protein is 2,3-bisphosphoglycerate-dependent phosphoglycerate mutase of Bacillus mycoides (strain KBAB4) (Bacillus weihenstephanensis).